Reading from the N-terminus, the 354-residue chain is D-alanine--D-alanine ligase (354 aa).

The region spanning 133 to 338 (KHLFAQAGLP…YSDLIEQLVE (206 aa)) is the ATP-grasp domain. 166–221 (EKELGYPCFVKPANLGSSVGISKCRNREELEKAFELAFEYDRKIVVEEGIAGREIE) is an ATP binding site. Mg(2+) is bound by residues Asp-292, Glu-305, and Asn-307.

The protein belongs to the D-alanine--D-alanine ligase family. It depends on Mg(2+) as a cofactor. Mn(2+) is required as a cofactor.

It localises to the cytoplasm. The catalysed reaction is 2 D-alanine + ATP = D-alanyl-D-alanine + ADP + phosphate + H(+). The protein operates within cell wall biogenesis; peptidoglycan biosynthesis. Its function is as follows. Cell wall formation. The protein is D-alanine--D-alanine ligase of Bacillus velezensis (strain DSM 23117 / BGSC 10A6 / LMG 26770 / FZB42) (Bacillus amyloliquefaciens subsp. plantarum).